We begin with the raw amino-acid sequence, 72 residues long: Translation initiation factor IF-1 (72 aa).

An S1-like domain is found at 1 to 72; the sequence is MSKEEVLEFS…TKGRITYRYK (72 aa).

It belongs to the IF-1 family. As to quaternary structure, component of the 30S ribosomal translation pre-initiation complex which assembles on the 30S ribosome in the order IF-2 and IF-3, IF-1 and N-formylmethionyl-tRNA(fMet); mRNA recruitment can occur at any time during PIC assembly.

It localises to the cytoplasm. Functionally, one of the essential components for the initiation of protein synthesis. Stabilizes the binding of IF-2 and IF-3 on the 30S subunit to which N-formylmethionyl-tRNA(fMet) subsequently binds. Helps modulate mRNA selection, yielding the 30S pre-initiation complex (PIC). Upon addition of the 50S ribosomal subunit IF-1, IF-2 and IF-3 are released leaving the mature 70S translation initiation complex. In Bartonella bacilliformis (strain ATCC 35685 / KC583 / Herrer 020/F12,63), this protein is Translation initiation factor IF-1.